The sequence spans 533 residues: Chromosomal replication initiator protein DnaA (533 aa).

The tract at residues 1 to 72 (MNDFWQHCSA…DLARDFWNAP (72 aa)) is domain I, interacts with DnaA modulators. The domain II stretch occupies residues 72 to 196 (PIEVQFVLDP…EAADSMYERS (125 aa)). A disordered region spans residues 83–113 (AGQRSPAGATPLAPRAPLPSANPAPVAPGPA). A compositionally biased stretch (pro residues) spans 96–110 (PRAPLPSANPAPVAP). Residues 197–413 (KLNPVLTFDN…GALRKILAYS (217 aa)) are domain III, AAA+ region. Residues G241, G243, K244, and T245 each contribute to the ATP site. Positions 414–533 (KFHGREITIE…LHVLEQTLKG (120 aa)) are domain IV, binds dsDNA.

The protein belongs to the DnaA family. In terms of assembly, oligomerizes as a right-handed, spiral filament on DNA at oriC.

Its subcellular location is the cytoplasm. Plays an essential role in the initiation and regulation of chromosomal replication. ATP-DnaA binds to the origin of replication (oriC) to initiate formation of the DNA replication initiation complex once per cell cycle. Binds the DnaA box (a 9 base pair repeat at the origin) and separates the double-stranded (ds)DNA. Forms a right-handed helical filament on oriC DNA; dsDNA binds to the exterior of the filament while single-stranded (ss)DNA is stabiized in the filament's interior. The ATP-DnaA-oriC complex binds and stabilizes one strand of the AT-rich DNA unwinding element (DUE), permitting loading of DNA polymerase. After initiation quickly degrades to an ADP-DnaA complex that is not apt for DNA replication. Binds acidic phospholipids. The chain is Chromosomal replication initiator protein DnaA from Burkholderia mallei (strain SAVP1).